A 1333-amino-acid polypeptide reads, in one-letter code: Protein CLASP-1 (1333 aa).

One copy of the HEAT 1 repeat lies at 168–206 (LIPQLCRLTNDPNSEVRDASTNCLVDLMVFGGKSIIAKI). Low complexity predominate over residues 269–305 (STTSFTSSARLSTPPRTNAPSLSPSPSTPSPLSLPAA). Residues 269–311 (STTSFTSSARLSTPPRTNAPSLSPSPSTPSPLSLPAANGRSRD) form a disordered region. A coiled-coil region spans residues 360-389 (SNSDVREKLETANSVLRNANEDWSKRANQL). Disordered regions lie at residues 579–711 (QKML…HQTP) and 764–792 (TPPKETSPPASLYARGYGNGSNGSNNSSN). The segment covering 601–611 (NQKQPQQPQQN) has biased composition (low complexity). A compositionally biased stretch (polar residues) spans 612–644 (ISQKFLSQRSASALDNKSQVLSIAKPQQSNPSR). Low complexity-rich tracts occupy residues 657–669 (SSTSSSFSAVRSS) and 686–707 (TNFNNNNNNNNKSSSSSPSTST). An HEAT 2 repeat occupies 1266–1304 (VAPCFVSAYDSTSSSVRKCAVFGLVALVQRVGMPRLETH).

Belongs to the CLASP family.

It localises to the cytoplasm. It is found in the cytoskeleton. In terms of biological role, microtubule plus-end tracking protein that promotes the stabilization of dynamic microtubules. The protein is Protein CLASP-1 of Caenorhabditis briggsae.